Consider the following 372-residue polypeptide: D-alanine--D-alanine ligase (372 aa).

An ATP-grasp domain is found at 145–349; sequence KTVLRAGGIP…CPNLLDQLIE (205 aa). 176–231 provides a ligand contact to ATP; the sequence is DRWGTSELFVKAVSLGSSVATLPVKTETEFTKAVKEVFRYDDRLMVEPRIRGREIE. Residues Asp-303, Glu-316, and Asn-318 each contribute to the Mg(2+) site.

Belongs to the D-alanine--D-alanine ligase family. It depends on Mg(2+) as a cofactor. Mn(2+) serves as cofactor.

It localises to the cytoplasm. The enzyme catalyses 2 D-alanine + ATP = D-alanyl-D-alanine + ADP + phosphate + H(+). Its pathway is cell wall biogenesis; peptidoglycan biosynthesis. Its function is as follows. Cell wall formation. This is D-alanine--D-alanine ligase from Coxiella burnetii (strain RSA 331 / Henzerling II).